The primary structure comprises 373 residues: tRNA N6-adenosine threonylcarbamoyltransferase (373 aa).

A divalent metal cation-binding residues include His133, His137, and Tyr154. Substrate-binding positions include 154–158 (YVSGG), Asp186, Gly201, Glu205, and Asn302. Asp331 lines the a divalent metal cation pocket.

It belongs to the KAE1 / TsaD family. Component of the EKC/KEOPS complex composed of at least BUD32, CGI121, GON7, KAE1 and PCC1; the whole complex dimerizes. Requires a divalent metal cation as cofactor.

Its subcellular location is the cytoplasm. It is found in the nucleus. The catalysed reaction is L-threonylcarbamoyladenylate + adenosine(37) in tRNA = N(6)-L-threonylcarbamoyladenosine(37) in tRNA + AMP + H(+). In terms of biological role, component of the EKC/KEOPS complex that is required for the formation of a threonylcarbamoyl group on adenosine at position 37 (t(6)A37) in tRNAs that read codons beginning with adenine. The complex is probably involved in the transfer of the threonylcarbamoyl moiety of threonylcarbamoyl-AMP (TC-AMP) to the N6 group of A37. KAE1 likely plays a direct catalytic role in this reaction, but requires other protein(s) of the complex to fulfill this activity. The EKC/KEOPS complex also promotes both telomere uncapping and telomere elongation. The complex is required for efficient recruitment of transcriptional coactivators. The sequence is that of tRNA N6-adenosine threonylcarbamoyltransferase from Debaryomyces hansenii (strain ATCC 36239 / CBS 767 / BCRC 21394 / JCM 1990 / NBRC 0083 / IGC 2968) (Yeast).